Consider the following 90-residue polypeptide: Small ribosomal subunit protein uS15 (90 aa).

The protein belongs to the universal ribosomal protein uS15 family. In terms of assembly, part of the 30S ribosomal subunit. Forms a bridge to the 50S subunit in the 70S ribosome, contacting the 23S rRNA.

Its function is as follows. One of the primary rRNA binding proteins, it binds directly to 16S rRNA where it helps nucleate assembly of the platform of the 30S subunit by binding and bridging several RNA helices of the 16S rRNA. In terms of biological role, forms an intersubunit bridge (bridge B4) with the 23S rRNA of the 50S subunit in the ribosome. The protein is Small ribosomal subunit protein uS15 of Campylobacter jejuni subsp. doylei (strain ATCC BAA-1458 / RM4099 / 269.97).